Consider the following 353-residue polypeptide: Guanine nucleotide-binding protein G(q) subunit alpha (353 aa).

Residues C3 and C4 are each lipidated (S-palmitoyl cysteine). Positions 32–353 constitute a G-alpha domain; sequence RELKLLLLGT…QLNLKEYNLV (322 aa). The G1 motif stretch occupies residues 35–48; sequence KLLLLGTGESGKST. Residues 40-47, 174-180, 199-203, 268-271, and A325 each bind GTP; these read GTGESGKS, LRVRVPT, DVGGQ, and NKKD. S47 and T180 together coordinate Mg(2+). Residues 172 to 180 are G2 motif; the sequence is DILRVRVPT. Positions 195–204 are G3 motif; the sequence is FRMVDVGGQR. Positions 264–271 are G4 motif; it reads ILFLNKKD. The interval 323–328 is G5 motif; it reads TCATDT.

Belongs to the G-alpha family. G(q) subfamily. As to quaternary structure, g proteins are composed of 3 units; alpha, beta and gamma. The alpha chain contains the guanine nucleotide binding site.

Functionally, guanine nucleotide-binding proteins (G proteins) are involved as modulators or transducers in various transmembrane signaling systems. The chain is Guanine nucleotide-binding protein G(q) subunit alpha (SCGQA) from Mizuhopecten yessoensis (Japanese scallop).